The primary structure comprises 309 residues: Dihydroorotate dehydrogenase B (NAD(+)), catalytic subunit (309 aa).

FMN-binding positions include serine 21 and 45 to 46; that span reads KA. Residues lysine 45 and 69–73 each bind substrate; that span reads NAIGL. Residues asparagine 99 and asparagine 127 each contribute to the FMN site. Asparagine 127 provides a ligand contact to substrate. The active-site Nucleophile is cysteine 130. Positions 165 and 191 each coordinate FMN. 192–193 provides a ligand contact to substrate; sequence NT. FMN is bound by residues glycine 217, 243–244, and 265–266; these read GG and GT.

The protein belongs to the dihydroorotate dehydrogenase family. Type 1 subfamily. As to quaternary structure, heterotetramer of 2 PyrK and 2 PyrD type B subunits. It depends on FMN as a cofactor.

It localises to the cytoplasm. It catalyses the reaction (S)-dihydroorotate + NAD(+) = orotate + NADH + H(+). It participates in pyrimidine metabolism; UMP biosynthesis via de novo pathway; orotate from (S)-dihydroorotate (NAD(+) route): step 1/1. Functionally, catalyzes the conversion of dihydroorotate to orotate with NAD(+) as electron acceptor. This Bacillus cytotoxicus (strain DSM 22905 / CIP 110041 / 391-98 / NVH 391-98) protein is Dihydroorotate dehydrogenase B (NAD(+)), catalytic subunit (pyrD).